The primary structure comprises 356 residues: MAYKLLIINPGSTSTKIGVYEGEKEVLEETLRHSAEEILKYATIFDQLDFRKEVILKVLKEKGIDINELDAVVGRGGMLKPIEGGTYEVNEAMVEDLKIGVQGPHASNLGGILSNEIAKEIGKRAFIVDPVVVDEMEDVARLSGVPELPRKSKFHALNQKAVAKRYAKEHNTSYEDVNLIVVHMGGGVSVGAHRKGRVIDVNNALDGDGPFSPERAGGVPSGELLEMCFSGKYSKEEVYKKLVGKGGFVAYANTNDARDLIKLSQEGDEKGSLIFNAFIYQIAKEIGSMAVVLDGEVDAIVLTGGIAYSDYVTNAINKKVKWIAPMVVYGGEDELLALAQGAIRVLDGVEEAKIYK.

It belongs to the acetokinase family.

It localises to the cytoplasm. It catalyses the reaction butanoate + ATP = butanoyl phosphate + ADP. Its pathway is lipid metabolism; butanoate metabolism. Catalyzes the conversion of butyryl-CoA through butyryl phosphate to butyrate. In Clostridium perfringens (strain 13 / Type A), this protein is Butyrate kinase (buk).